A 248-amino-acid polypeptide reads, in one-letter code: Metallo-beta-lactamase type 2 (248 aa).

Positions 1–21 (MKGLKGLLVLALGFTGLQVFG) are cleaved as a signal peptide. Positions 97, 99, 101, 160, and 179 each coordinate Zn(2+). Position 182 (Lys-182) interacts with substrate. His-221 lines the Zn(2+) pocket.

This sequence belongs to the metallo-beta-lactamase superfamily. Class-B beta-lactamase family. In terms of assembly, monomer. The cofactor is Zn(2+).

The protein localises to the periplasm. The catalysed reaction is a beta-lactam + H2O = a substituted beta-amino acid. Its function is as follows. Confers resistance to the different beta-lactams antibiotics (penicillin, cephalosporin and carbapenem) via the hydrolysis of the beta-lactam ring. The protein is Metallo-beta-lactamase type 2 (blaB7) of Elizabethkingia meningoseptica (Chryseobacterium meningosepticum).